Here is a 344-residue protein sequence, read N- to C-terminus: Phosphoribosylformylglycinamidine cyclo-ligase (344 aa).

The protein belongs to the AIR synthase family.

The protein resides in the cytoplasm. It carries out the reaction 2-formamido-N(1)-(5-O-phospho-beta-D-ribosyl)acetamidine + ATP = 5-amino-1-(5-phospho-beta-D-ribosyl)imidazole + ADP + phosphate + H(+). The protein operates within purine metabolism; IMP biosynthesis via de novo pathway; 5-amino-1-(5-phospho-D-ribosyl)imidazole from N(2)-formyl-N(1)-(5-phospho-D-ribosyl)glycinamide: step 2/2. In Leptospira interrogans serogroup Icterohaemorrhagiae serovar Lai (strain 56601), this protein is Phosphoribosylformylglycinamidine cyclo-ligase.